Here is a 242-residue protein sequence, read N- to C-terminus: Glucosamine-6-phosphate deaminase (242 aa).

The Proton acceptor; for enolization step role is filled by Asp71. The For ring-opening step role is filled by Asn142. Catalysis depends on His144, which acts as the Proton acceptor; for ring-opening step. The For ring-opening step role is filled by Glu149.

This sequence belongs to the glucosamine/galactosamine-6-phosphate isomerase family. NagB subfamily.

It catalyses the reaction alpha-D-glucosamine 6-phosphate + H2O = beta-D-fructose 6-phosphate + NH4(+). Its pathway is amino-sugar metabolism; N-acetylneuraminate degradation; D-fructose 6-phosphate from N-acetylneuraminate: step 5/5. Catalyzes the reversible isomerization-deamination of glucosamine 6-phosphate (GlcN6P) to form fructose 6-phosphate (Fru6P) and ammonium ion. The chain is Glucosamine-6-phosphate deaminase from Malacoplasma penetrans (strain HF-2) (Mycoplasma penetrans).